The following is a 117-amino-acid chain: Large ribosomal subunit protein bL20 (117 aa).

The protein belongs to the bacterial ribosomal protein bL20 family.

Its function is as follows. Binds directly to 23S ribosomal RNA and is necessary for the in vitro assembly process of the 50S ribosomal subunit. It is not involved in the protein synthesizing functions of that subunit. The sequence is that of Large ribosomal subunit protein bL20 from Nitratidesulfovibrio vulgaris (strain DSM 19637 / Miyazaki F) (Desulfovibrio vulgaris).